The sequence spans 251 residues: Putative glutamine amidotransferase YLR126C (251 aa).

Positions 48–232 constitute a Glutamine amidotransferase type-1 domain; sequence EVFHVQKNVF…NRYERQCQEL (185 aa). Active-site for GATase activity residues include cysteine 112, histidine 198, and glutamate 200.

The protein resides in the cytoplasm. In terms of biological role, may have a role in copper and iron homeostasis. The chain is Putative glutamine amidotransferase YLR126C from Saccharomyces cerevisiae (strain ATCC 204508 / S288c) (Baker's yeast).